The following is a 267-amino-acid chain: Tetrahydromethanopterin S-methyltransferase subunit C (267 aa).

The next 7 membrane-spanning stretches (helical) occupy residues 19 to 39, 75 to 95, 97 to 117, 140 to 160, 162 to 182, 198 to 218, and 221 to 241; these read IMALGIVGGLVGIYLGNFAPP, IGMLALGMGILAALFGLSVGG, AGPIVAIVVAAIIGGVIGALA, TLVILGLSVVIAGSFDFASVV, YVVANGYIALIFIIGGMGILH, LMLAVEKGAIALIIAGFASSL, and GLMAAGLNMLIGIIIWYVAFS.

Belongs to the MtrC family. In terms of assembly, the complex is composed of 8 subunits; MtrA, MtrB, MtrC, MtrD, MtrE, MtrF, MtrG and MtrH.

It is found in the cell membrane. It catalyses the reaction 5-methyl-5,6,7,8-tetrahydromethanopterin + coenzyme M + 2 Na(+)(in) = 5,6,7,8-tetrahydromethanopterin + methyl-coenzyme M + 2 Na(+)(out). Its pathway is one-carbon metabolism; methanogenesis from CO(2); methyl-coenzyme M from 5,10-methylene-5,6,7,8-tetrahydromethanopterin: step 2/2. Its function is as follows. Part of a complex that catalyzes the formation of methyl-coenzyme M and tetrahydromethanopterin from coenzyme M and methyl-tetrahydromethanopterin. This is an energy-conserving, sodium-ion translocating step. The chain is Tetrahydromethanopterin S-methyltransferase subunit C from Methanosarcina barkeri (strain Fusaro / DSM 804).